The primary structure comprises 854 residues: Protein mono-ADP-ribosyltransferase PARP8 (854 aa).

2 disordered regions span residues 113–138 and 291–310; these read NGEESRQNSTVEEDSEGDNDSEEFYY and SYPPPGCGKSKSKLKSEQDG. Over residues 123-135 the composition is skewed to acidic residues; that stretch reads VEEDSEGDNDSEE. ADP-ribosylcysteine is present on residues C332, C367, C376, and C395. The PARP catalytic domain maps to 617–844; that stretch reads EMTQAPYLEI…QEGGIHKEIL (228 aa). Positions 750–777 are disordered; sequence QKVSAKDEPASSSKSSNTSQSQKKGQQS. Residues 760–777 show a composition bias toward low complexity; it reads SSSKSSNTSQSQKKGQQS.

This sequence belongs to the ARTD/PARP family. In terms of processing, auto-mono-ADP-ribosylated.

The enzyme catalyses L-cysteinyl-[protein] + NAD(+) = S-(ADP-D-ribosyl)-L-cysteinyl-[protein] + nicotinamide + H(+). Mono-ADP-ribosyltransferase that mediates mono-ADP-ribosylation of target proteins. The polypeptide is Protein mono-ADP-ribosyltransferase PARP8 (Homo sapiens (Human)).